The sequence spans 146 residues: Large ribosomal subunit protein uL15 (146 aa).

Residues 1-56 (MKLHELKAAEGANKASKRVGRGTGSGLGKTSGRGQNGQNSRSGGGVRPGFEGGQMP) form a disordered region. Gly residues-rich tracts occupy residues 21 to 35 (RGTG…GRGQ) and 42 to 52 (SGGGVRPGFEG).

It belongs to the universal ribosomal protein uL15 family. Part of the 50S ribosomal subunit.

Its function is as follows. Binds to the 23S rRNA. In Clostridium botulinum (strain ATCC 19397 / Type A), this protein is Large ribosomal subunit protein uL15.